Reading from the N-terminus, the 235-residue chain is (5-formylfuran-3-yl)methyl phosphate synthase (235 aa).

K27 (schiff-base intermediate with substrate) is an active-site residue. K86 serves as the catalytic Proton acceptor.

This sequence belongs to the MfnB family.

It catalyses the reaction 2 D-glyceraldehyde 3-phosphate = 4-(hydroxymethyl)-2-furancarboxaldehyde phosphate + phosphate + 2 H2O. It participates in cofactor biosynthesis; methanofuran biosynthesis. Functionally, catalyzes the formation of 4-(hydroxymethyl)-2-furancarboxaldehyde phosphate (4-HFC-P) from two molecules of glyceraldehyde-3-P (GA-3-P). This chain is (5-formylfuran-3-yl)methyl phosphate synthase, found in Archaeoglobus fulgidus (strain ATCC 49558 / DSM 4304 / JCM 9628 / NBRC 100126 / VC-16).